The sequence spans 784 residues: Repetin (784 aa).

The segment at 1–91 (MAQLLNSILS…VQACYHKLDN (91 aa)) is S-100-like. EF-hand domains lie at 13 to 48 (DVFHKYAKGNGDCALLCKEELKQLLLAEFGDILQRP) and 49 to 84 (NDPETVETILNLLDQDRDGHIDFHEYLLLVFQLVQA). Glu-32, Asp-62, Asp-64, Asp-66, His-68, and Glu-73 together coordinate Ca(2+). Disordered stretches follow at residues 92 to 221 (KSHG…QAKW), 282 to 584 (GCGQ…SHYI), 601 to 661 (TEGT…HQHK), and 677 to 784 (RDWQ…NHQR). Residues 124–201 (RHEEERQNSH…FSFDQSERQS (78 aa)) show a composition bias toward basic and acidic residues. Polar residues-rich tracts occupy residues 286-296 (TDRQGQSSHYG), 304-343 (SYHYGQTDRQGQSSHYSQTDRQGQSSHYSQPDRQGQSSHY), 356-392 (DQTNRQGQGSHYSQPNRQGQSSHYGQPDTQDQSSHYG), 400-486 (SSHY…QSSH), 504-584 (GQGQ…SHYI), 610-646 (VEQSGRSGRLSQQTPGQEGYQNQGQGFQSRDSQQNGH), and 680-695 (QSCSSEQGHRQAQTRQ). 2 stretches are compositionally biased toward basic and acidic residues: residues 704–722 (WAEEEQGHQTWDRHSHESQ) and 729–784 (QDRR…NHQR).

Belongs to the S100-fused protein family. Post-translationally, potential substrate of transglutaminase. Some arginines are probably converted to citrullines by peptidylarginine deimidase. As to expression, expression is scattered in the normal epidermis but strong in the acrosyringium, the inner hair root sheath and in the filiform papilli of the tongue.

Its subcellular location is the secreted. It localises to the extracellular space. The protein localises to the extracellular matrix. In terms of biological role, involved in the cornified cell envelope formation. Multifunctional epidermal matrix protein. Reversibly binds calcium. The chain is Repetin (RPTN) from Homo sapiens (Human).